The chain runs to 275 residues: Bis(5'-nucleosyl)-tetraphosphatase, symmetrical (275 aa).

The protein belongs to the Ap4A hydrolase family.

The catalysed reaction is P(1),P(4)-bis(5'-adenosyl) tetraphosphate + H2O = 2 ADP + 2 H(+). Functionally, hydrolyzes diadenosine 5',5'''-P1,P4-tetraphosphate to yield ADP. The sequence is that of Bis(5'-nucleosyl)-tetraphosphatase, symmetrical from Haemophilus influenzae (strain PittEE).